The chain runs to 21 residues: Major outer membrane protein (21 aa).

As to quaternary structure, disulfide bond interactions within and between MOMP molecules and other components form high molecular-weight oligomers.

The protein resides in the cell outer membrane. Its function is as follows. Structural rigidity of the outer membrane of elementary bodies and porin forming, permitting diffusion of solutes through the intracellular reticulate body membrane. The polypeptide is Major outer membrane protein (Actinobacillus equuli).